Reading from the N-terminus, the 206-residue chain is ATP-dependent Clp protease proteolytic subunit (206 aa).

Catalysis depends on Ser108, which acts as the Nucleophile. His133 is a catalytic residue.

Belongs to the peptidase S14 family. Fourteen ClpP subunits assemble into 2 heptameric rings which stack back to back to give a disk-like structure with a central cavity, resembling the structure of eukaryotic proteasomes.

The protein resides in the cytoplasm. The catalysed reaction is Hydrolysis of proteins to small peptides in the presence of ATP and magnesium. alpha-casein is the usual test substrate. In the absence of ATP, only oligopeptides shorter than five residues are hydrolyzed (such as succinyl-Leu-Tyr-|-NHMec, and Leu-Tyr-Leu-|-Tyr-Trp, in which cleavage of the -Tyr-|-Leu- and -Tyr-|-Trp bonds also occurs).. Cleaves peptides in various proteins in a process that requires ATP hydrolysis. Has a chymotrypsin-like activity. Plays a major role in the degradation of misfolded proteins. The protein is ATP-dependent Clp protease proteolytic subunit of Chromohalobacter salexigens (strain ATCC BAA-138 / DSM 3043 / CIP 106854 / NCIMB 13768 / 1H11).